The following is a 158-amino-acid chain: NAD(P)H-quinone oxidoreductase subunit N (158 aa).

This sequence belongs to the complex I NdhN subunit family. As to quaternary structure, NDH-1 can be composed of about 15 different subunits; different subcomplexes with different compositions have been identified which probably have different functions.

It localises to the cellular thylakoid membrane. The catalysed reaction is a plastoquinone + NADH + (n+1) H(+)(in) = a plastoquinol + NAD(+) + n H(+)(out). The enzyme catalyses a plastoquinone + NADPH + (n+1) H(+)(in) = a plastoquinol + NADP(+) + n H(+)(out). Functionally, NDH-1 shuttles electrons from an unknown electron donor, via FMN and iron-sulfur (Fe-S) centers, to quinones in the respiratory and/or the photosynthetic chain. The immediate electron acceptor for the enzyme in this species is believed to be plastoquinone. Couples the redox reaction to proton translocation, and thus conserves the redox energy in a proton gradient. Cyanobacterial NDH-1 also plays a role in inorganic carbon-concentration. In Cyanothece sp. (strain PCC 7425 / ATCC 29141), this protein is NAD(P)H-quinone oxidoreductase subunit N.